The sequence spans 206 residues: dITP/XTP pyrophosphatase (206 aa).

Thr-7 to Lys-12 is a binding site for substrate. The active-site Proton acceptor is Asp-74. Asp-74 provides a ligand contact to Mg(2+). Substrate is bound by residues Ser-75, Phe-159–Asp-162, Lys-182, and His-187–Arg-188.

The protein belongs to the HAM1 NTPase family. In terms of assembly, homodimer. Mg(2+) serves as cofactor.

The enzyme catalyses XTP + H2O = XMP + diphosphate + H(+). The catalysed reaction is dITP + H2O = dIMP + diphosphate + H(+). It catalyses the reaction ITP + H2O = IMP + diphosphate + H(+). In terms of biological role, pyrophosphatase that catalyzes the hydrolysis of nucleoside triphosphates to their monophosphate derivatives, with a high preference for the non-canonical purine nucleotides XTP (xanthosine triphosphate), dITP (deoxyinosine triphosphate) and ITP. Seems to function as a house-cleaning enzyme that removes non-canonical purine nucleotides from the nucleotide pool, thus preventing their incorporation into DNA/RNA and avoiding chromosomal lesions. The sequence is that of dITP/XTP pyrophosphatase from Campylobacter hominis (strain ATCC BAA-381 / DSM 21671 / CCUG 45161 / LMG 19568 / NCTC 13146 / CH001A).